The following is a 143-amino-acid chain: UPF0201 protein Msed_1787 (143 aa).

The protein belongs to the UPF0201 family.

This chain is UPF0201 protein Msed_1787, found in Metallosphaera sedula (strain ATCC 51363 / DSM 5348 / JCM 9185 / NBRC 15509 / TH2).